A 210-amino-acid polypeptide reads, in one-letter code: Ribosomal RNA small subunit methyltransferase G (210 aa).

S-adenosyl-L-methionine-binding positions include G76, L81, 127-128, and R142; that span reads VE.

Belongs to the methyltransferase superfamily. RNA methyltransferase RsmG family.

It localises to the cytoplasm. The enzyme catalyses guanosine(527) in 16S rRNA + S-adenosyl-L-methionine = N(7)-methylguanosine(527) in 16S rRNA + S-adenosyl-L-homocysteine. Functionally, specifically methylates the N7 position of guanine in position 527 of 16S rRNA. This chain is Ribosomal RNA small subunit methyltransferase G, found in Vibrio atlanticus (strain LGP32) (Vibrio splendidus (strain Mel32)).